The chain runs to 158 residues: Endoribonuclease YbeY (158 aa).

The Zn(2+) site is built by histidine 118, histidine 122, and histidine 128.

The protein belongs to the endoribonuclease YbeY family. Zn(2+) serves as cofactor.

Its subcellular location is the cytoplasm. In terms of biological role, single strand-specific metallo-endoribonuclease involved in late-stage 70S ribosome quality control and in maturation of the 3' terminus of the 16S rRNA. The sequence is that of Endoribonuclease YbeY from Bartonella quintana (strain Toulouse) (Rochalimaea quintana).